Consider the following 204-residue polypeptide: 3-isopropylmalate dehydratase small subunit (204 aa).

Belongs to the LeuD family. LeuD type 1 subfamily. Heterodimer of LeuC and LeuD.

The enzyme catalyses (2R,3S)-3-isopropylmalate = (2S)-2-isopropylmalate. The protein operates within amino-acid biosynthesis; L-leucine biosynthesis; L-leucine from 3-methyl-2-oxobutanoate: step 2/4. Catalyzes the isomerization between 2-isopropylmalate and 3-isopropylmalate, via the formation of 2-isopropylmaleate. The protein is 3-isopropylmalate dehydratase small subunit of Roseiflexus sp. (strain RS-1).